A 771-amino-acid chain; its full sequence is DNA helicase/primase complex-associated protein (771 aa).

Belongs to the herpesviridae HEPA family. As to quaternary structure, associates with the primase and the helicase to form the helicase-primase complex. Interacts with the origin-binding protein. Interacts with the polymerase catalytic subunit.

It localises to the host nucleus. In terms of biological role, component of the helicase/primase complex. Unwinds the DNA at the replication forks and generates single-stranded DNA for both leading and lagging strand synthesis. The primase synthesizes short RNA primers on the lagging strand that the polymerase presumably elongates using dNTPs. The primase-associated factor has no known catalytic activity in the complex and may serve to facilitate the formation of the replisome by directly interacting with the origin-binding protein and the polymerase. The chain is DNA helicase/primase complex-associated protein from Homo sapiens (Human).